A 523-amino-acid chain; its full sequence is Endoglucanase 19 (523 aa).

The signal sequence occupies residues 1–52 (MCSWSLSSHTLTSPVRQAAMEPKSSSCGGAGIRLRLLVVLHLLLLVPSSAMA). The active-site Nucleophile is the Asp107. An N-linked (GlcNAc...) asparagine glycan is attached at Asn279. Catalysis depends on residues His442, Asp493, and Glu502.

Belongs to the glycosyl hydrolase 9 (cellulase E) family.

It localises to the secreted. The enzyme catalyses Endohydrolysis of (1-&gt;4)-beta-D-glucosidic linkages in cellulose, lichenin and cereal beta-D-glucans.. The protein is Endoglucanase 19 of Oryza sativa subsp. japonica (Rice).